We begin with the raw amino-acid sequence, 271 residues long: NAD kinase (271 aa).

Asp64 serves as the catalytic Proton acceptor. NAD(+) contacts are provided by residues 64 to 65 (DG), Arg69, 132 to 133 (NE), Lys143, Arg160, Asp162, 173 to 178 (TAYAMS), Ala197, and Gln231.

This sequence belongs to the NAD kinase family. A divalent metal cation serves as cofactor.

It is found in the cytoplasm. The enzyme catalyses NAD(+) + ATP = ADP + NADP(+) + H(+). In terms of biological role, involved in the regulation of the intracellular balance of NAD and NADP, and is a key enzyme in the biosynthesis of NADP. Catalyzes specifically the phosphorylation on 2'-hydroxyl of the adenosine moiety of NAD to yield NADP. This Methanocorpusculum labreanum (strain ATCC 43576 / DSM 4855 / Z) protein is NAD kinase.